A 181-amino-acid chain; its full sequence is HGPRTase-like protein 2 (181 aa).

This sequence belongs to the purine/pyrimidine phosphoribosyltransferase family. Archaeal HPRT subfamily.

Its function is as follows. May catalyze a purine salvage reaction, the substrate is unknown. The sequence is that of HGPRTase-like protein 2 from Haloferax volcanii (strain ATCC 29605 / DSM 3757 / JCM 8879 / NBRC 14742 / NCIMB 2012 / VKM B-1768 / DS2) (Halobacterium volcanii).